A 326-amino-acid polypeptide reads, in one-letter code: Homoserine kinase (326 aa).

This sequence belongs to the pseudomonas-type ThrB family.

The catalysed reaction is L-homoserine + ATP = O-phospho-L-homoserine + ADP + H(+). Its pathway is amino-acid biosynthesis; L-threonine biosynthesis; L-threonine from L-aspartate: step 4/5. The polypeptide is Homoserine kinase (Sinorhizobium medicae (strain WSM419) (Ensifer medicae)).